The primary structure comprises 391 residues: Saxitoxin and tetrodotoxin-binding protein 2 (391 aa).

The signal sequence occupies residues 1 to 20; it reads MGAVPGVVLLLMLAVLGIRA. 2 consecutive repeat copies span residues 24 to 202 and 203 to 391. Residues asparagine 41, asparagine 54, asparagine 63, asparagine 97, asparagine 234, asparagine 268, asparagine 277, and asparagine 307 are each glycosylated (N-linked (GlcNAc...) asparagine).

In terms of assembly, homodimer or heterodimer of PSTBP1 and PSTBP2. Post-translationally, glycosylated.

It localises to the secreted. Functionally, binds both saxitoxin and tetradotoxin. May play a role in toxin accumulation and/or excretion. The protein is Saxitoxin and tetrodotoxin-binding protein 2 (psbp2) of Takifugu pardalis (Panther puffer).